We begin with the raw amino-acid sequence, 217 residues long: ATP-dependent Clp protease proteolytic subunit 2 (217 aa).

Ser-121 serves as the catalytic Nucleophile. The active site involves His-146.

This sequence belongs to the peptidase S14 family. As to quaternary structure, fourteen ClpP subunits assemble into 2 heptameric rings which stack back to back to give a disk-like structure with a central cavity, resembling the structure of eukaryotic proteasomes.

It is found in the cytoplasm. The catalysed reaction is Hydrolysis of proteins to small peptides in the presence of ATP and magnesium. alpha-casein is the usual test substrate. In the absence of ATP, only oligopeptides shorter than five residues are hydrolyzed (such as succinyl-Leu-Tyr-|-NHMec, and Leu-Tyr-Leu-|-Tyr-Trp, in which cleavage of the -Tyr-|-Leu- and -Tyr-|-Trp bonds also occurs).. In terms of biological role, cleaves peptides in various proteins in a process that requires ATP hydrolysis. Has a chymotrypsin-like activity. Plays a major role in the degradation of misfolded proteins. In Paraburkholderia xenovorans (strain LB400), this protein is ATP-dependent Clp protease proteolytic subunit 2.